Consider the following 322-residue polypeptide: Mitochondrial thiamine pyrophosphate carrier 1 (322 aa).

3 Solcar repeats span residues 12–111 (GSKT…VTLA), 122–208 (PAAA…LRVP), and 215–310 (PFGS…VLRL). 6 consecutive transmembrane segments (helical) span residues 18–38 (MIAG…LDVV), 92–108 (LMYV…YRSV), 128–148 (FIAG…LDLL), 180–200 (FFQG…IFFA), 221–241 (ATAG…FDLI), and 285–302 (GLTV…VTMW).

The protein belongs to the mitochondrial carrier (TC 2.A.29) family.

It is found in the mitochondrion inner membrane. Functionally, mitochondrial transporter that mediates uptake of thiamine pyrophosphate (ThPP) into mitochondria. This chain is Mitochondrial thiamine pyrophosphate carrier 1 (tpc1), found in Sclerotinia sclerotiorum (strain ATCC 18683 / 1980 / Ss-1) (White mold).